The sequence spans 175 residues: NADH-ubiquinone oxidoreductase chain 6 (175 aa).

The next 6 membrane-spanning stretches (helical) occupy residues 1-21 (MMAY…VGFS), 25-45 (SPIY…GIVM), 47-67 (FGGS…MLVV), 87-107 (AAVL…VLYV), 116-136 (VFNF…FGVF), and 149-169 (YGVW…LVIL).

This sequence belongs to the complex I subunit 6 family. As to quaternary structure, core subunit of respiratory chain NADH dehydrogenase (Complex I) which is composed of 45 different subunits.

The protein localises to the mitochondrion inner membrane. The catalysed reaction is a ubiquinone + NADH + 5 H(+)(in) = a ubiquinol + NAD(+) + 4 H(+)(out). Its function is as follows. Core subunit of the mitochondrial membrane respiratory chain NADH dehydrogenase (Complex I) which catalyzes electron transfer from NADH through the respiratory chain, using ubiquinone as an electron acceptor. Essential for the catalytic activity and assembly of complex I. The sequence is that of NADH-ubiquinone oxidoreductase chain 6 (MT-ND6) from Ceratotherium simum (White rhinoceros).